A 49-amino-acid polypeptide reads, in one-letter code: Large ribosomal subunit protein bL33A (49 aa).

Belongs to the bacterial ribosomal protein bL33 family.

The chain is Large ribosomal subunit protein bL33A from Staphylococcus aureus (strain COL).